An 876-amino-acid polypeptide reads, in one-letter code: Alanine--tRNA ligase (876 aa).

Residues histidine 565, histidine 569, cysteine 667, and histidine 671 each contribute to the Zn(2+) site.

This sequence belongs to the class-II aminoacyl-tRNA synthetase family. Requires Zn(2+) as cofactor.

It localises to the cytoplasm. The catalysed reaction is tRNA(Ala) + L-alanine + ATP = L-alanyl-tRNA(Ala) + AMP + diphosphate. In terms of biological role, catalyzes the attachment of alanine to tRNA(Ala) in a two-step reaction: alanine is first activated by ATP to form Ala-AMP and then transferred to the acceptor end of tRNA(Ala). Also edits incorrectly charged Ser-tRNA(Ala) and Gly-tRNA(Ala) via its editing domain. The sequence is that of Alanine--tRNA ligase from Staphylococcus aureus (strain MSSA476).